A 158-amino-acid polypeptide reads, in one-letter code: Transcription elongation factor GreA (158 aa).

Positions Ala45–Glu72 form a coiled coil.

It belongs to the GreA/GreB family.

In terms of biological role, necessary for efficient RNA polymerase transcription elongation past template-encoded arresting sites. The arresting sites in DNA have the property of trapping a certain fraction of elongating RNA polymerases that pass through, resulting in locked ternary complexes. Cleavage of the nascent transcript by cleavage factors such as GreA or GreB allows the resumption of elongation from the new 3'terminus. GreA releases sequences of 2 to 3 nucleotides. This Xylella fastidiosa (strain M23) protein is Transcription elongation factor GreA.